Consider the following 1196-residue polypeptide: MEQASTMAEPRGPVDHGVQIRFITEPVGNAEMDTLRRGGRRPAKDARANTYGVAVRVQGIAGQPFVVLNSGEQGSDSFGVQIKGTNNRGPPGALSSDSELPESTYSHAKEFPARSQGSMSDEELGAHWNGRLLRSQSQASLKGPAPVSPSTRSTSLLQLAPEVASPGSTIDTAPLSSVDSLINKFDSRQGGQARGRTGRRMRTLPPEQRKRSQSLDNRLPRDTLDEREHQFPTHWTPSTKRDSHMGNSKQSSQNQGPLGGFSCSRQTQDWVLQSFEEPRGRAWDPGMLQFKSTPDLLRDQQETAPPGSVDHVKATIYSILREGSSETETSVRRKVNLVLEQMQPLVMTSGSAKGLTGQSELSQKVEELQQKLDEEVKKRPKLESSRLGLERQLQEKAEECSQLQELLERRKGEAQQSTKELQNMKLLVDQSERVRCGLEAQVKELQDKLKQAQEPEPAKEALMKDLLEARELLEEVLEGKQRMEEHLRLRERELTALKGALKEEVASRDQEVEHVRQQCQRDAEQLRRSIQDATQDHAALEVERQKMSTLVRELQKELEETSEETGHWQSMFQKNKDELRATKQELLQLRMEKEEIEEELGEKIEVLQRELGQARAGAADTRQMEELKKELCQTQKELKELKEEQQNQEVAGRHRERELEKQLKVEADRGQGLEQQNLQLQKTLQQLRQDCEEASKAQVAAEAEVAVLGQRRAAVEVTLRETQEENDEFRRRILGLEQQLKEARGLAEGGEVAEARLRDKVQRLEAEKQRLEEALNAAQEEEGSLAAAKRALEARLEEAQRGLARLGQEQLALNRALEEEGKQREALRRSKAELEEQKRLLDKTVCQLNKELEQIGNDSKQALQQLQAQLEDYKEKARREVADAQRQAKEWATEAEKNSGGLSRLQDETQRLRQALQASQADRDTARLDKELLAQRLQGLEQEAENKKRSQDDRARQLKGLEEKVSRLEAELDEERSTVELLTERVTRGRDQVDQLRSELMQERSARQDLECDKISLERQNKDLKSRLASSEGFQKPSASLSQLESQNQELQERLQAEEREKTVLQSTNRKLERRVKELSIQIDDERQHVNDQKDQLSLRVKALKRQVDEAEEEIERLDGLRKKAQRELEEQHEVNEQLQARIKTLEKDSWRKASRSAAESAQREGLSSDEEFDSVYDPSSIASLLTESNLQTSSC.

Positions 7 to 354 are head; the sequence is MAEPRGPVDH…LVMTSGSAKG (348 aa). The ZIM signature appears at 48 to 62; sequence ANTYGVAVRVQGIAG. The interval 54-67 is interaction with TJP1/ZO1; sequence AVRVQGIAGQPFVV. The segment at 82–105 is disordered; sequence IKGTNNRGPPGALSSDSELPESTY. A phosphoserine mark is found at S95, S96, S98, S135, S137, S140, S155, S165, and S214. Polar residues predominate over residues 95–105; it reads SSDSELPESTY. Residues 183–263 form a disordered region; the sequence is NKFDSRQGGQ…NQGPLGGFSC (81 aa). Basic and acidic residues predominate over residues 218 to 231; it reads RLPRDTLDEREHQF. Positions 245–256 are enriched in polar residues; the sequence is MGNSKQSSQNQG. S274 carries the post-translational modification Phosphoserine. A coiled-coil region spans residues 355 to 1150; sequence LTGQSELSQK…ARIKTLEKDS (796 aa). K576 bears the N6-acetyllysine mark. The segment covering 884–897 has biased composition (basic and acidic residues); the sequence is AQRQAKEWATEAEK. Disordered stretches follow at residues 884–906, 1023–1061, and 1149–1174; these read AQRQ…SRLQ, DLKS…EERE, and DSWR…EEFD. The span at 1038–1050 shows a compositional bias: low complexity; it reads SASLSQLESQNQE. Residues 1051-1061 show a composition bias toward basic and acidic residues; that stretch reads LQERLQAEERE. Residues 1155–1196 are tail; it reads SRSAAESAQREGLSSDEEFDSVYDPSSIASLLTESNLQTSSC. S1168, S1169, and S1175 each carry phosphoserine.

It belongs to the cingulin family. In terms of assembly, homodimer. Interacts with TJP1/ZO1 and SPEF1.

The protein resides in the cell junction. It is found in the tight junction. In terms of biological role, probably plays a role in the formation and regulation of the tight junction (TJ) paracellular permeability barrier. The chain is Cingulin from Canis lupus familiaris (Dog).